Consider the following 111-residue polypeptide: 4'-hydroxy-3'-methoxypropiophenone carrier protein ppsC (111 aa).

A disordered region spans residues 1 to 21; it reads MSAQVMRPGTPQHEGQEFLSG.

Its pathway is secondary metabolite biosynthesis. Its function is as follows. 4'-hydroxy-3'-methoxypropiophenone carrier protein; part of the gene cluster that mediates the biosynthesis of 2,4'-dihydroxy-3'-methoxypropiophenone. The first step of the pathway is the conversion of acetate into acetyl-CoA by the acyl-CoA ligase ppsA. Acetyl-CoA is then used as a starter unit by the polyketide synthase ppsB and condensed with 4 malonyl-CoA unit to produce the pentaketide backbone. During polyketide extension, the polykedite chain is probably reduced and dehydrated by the KR and PT domains, respectively. O-methylation seems to be catalyzed by an unknown methyltransferase rather than by the CMeT domain of ppsB. Two hydroxylations and one further decarboxylation step catalyzed by yet unknown enzymes are then required to yield 4'-hydroxy-3'-methoxypropiophenone. PpsC functions as a carrier protein to transport 4'-hydroxy-3'-methoxypropiophenone to a specific cell compartment in which 4'-hydroxy-3'-methoxypropiophenone is hydroxylated to 2,4'-dihydroxy-3'-methoxypropiophenone by a still to be identified enzyme. This Aspergillus oryzae (strain ATCC 42149 / RIB 40) (Yellow koji mold) protein is 4'-hydroxy-3'-methoxypropiophenone carrier protein ppsC.